Consider the following 440-residue polypeptide: Ribulose bisphosphate carboxylase large chain (440 aa).

Lys-3 carries the post-translational modification N6,N6,N6-trimethyllysine. Asn-112 and Thr-162 together coordinate substrate. Lys-164 acts as the Proton acceptor in catalysis. Position 166 (Lys-166) interacts with substrate. Mg(2+)-binding residues include Lys-190, Asp-192, and Glu-193. Lys-190 carries the N6-carboxylysine modification. His-283 functions as the Proton acceptor in the catalytic mechanism. Substrate-binding residues include Arg-284, His-316, and Ser-368.

The protein belongs to the RuBisCO large chain family. Type I subfamily. Heterohexadecamer of 8 large chains and 8 small chains; disulfide-linked. The disulfide link is formed within the large subunit homodimers. Mg(2+) is required as a cofactor. In terms of processing, the disulfide bond which can form in the large chain dimeric partners within the hexadecamer appears to be associated with oxidative stress and protein turnover.

It is found in the plastid. It localises to the chloroplast. The catalysed reaction is 2 (2R)-3-phosphoglycerate + 2 H(+) = D-ribulose 1,5-bisphosphate + CO2 + H2O. It carries out the reaction D-ribulose 1,5-bisphosphate + O2 = 2-phosphoglycolate + (2R)-3-phosphoglycerate + 2 H(+). Its function is as follows. RuBisCO catalyzes two reactions: the carboxylation of D-ribulose 1,5-bisphosphate, the primary event in carbon dioxide fixation, as well as the oxidative fragmentation of the pentose substrate in the photorespiration process. Both reactions occur simultaneously and in competition at the same active site. This is Ribulose bisphosphate carboxylase large chain from Bambusa multiplex (Hedge bamboo).